Reading from the N-terminus, the 107-residue chain is U1-lycotoxin-Ls1m (107 aa).

The N-terminal stretch at 1–20 is a signal peptide; it reads MMKVLVVVALLVTLISYSSS. Positions 21-41 are excised as a propeptide; the sequence is EGIDDLEADELLSLMANEQTR. 4 cysteine pairs are disulfide-bonded: C44-C59, C51-C68, C58-C86, and C70-C84.

It belongs to the neurotoxin 19 (CSTX) family. 04 (U1-Lctx) subfamily. Expressed by the venom gland.

It localises to the secreted. The chain is U1-lycotoxin-Ls1m from Lycosa singoriensis (Wolf spider).